Consider the following 159-residue polypeptide: MRRRVFSSQDWRASGWDGMGFFSRRTFCGRSGRSCRGQLVQVSRPEVSAGSLLLPAPQAEDHSSRILYPRPKSLLPKMMNADMDAVDAENQVELEEKTRLINQVLELQHTLEDLSARVDAVKEENLKLKSENQVLGQYIENLMSASSVFQTTDTKSKRK.

A coiled-coil region spans residues 78 to 146 (MMNADMDAVD…QYIENLMSAS (69 aa)).

It belongs to the SCOC family. As to quaternary structure, homodimer. Interacts with ARL1, ARL2 and ARL3. Directly interacts with FEZ1 and UVRAG. The interaction with UVRAG is reduced by amino acid starvation, but the complex is stabilized in the presence of FEZ1. Interacts with NRBF2. Widely expressed with highest levels in brain, heart and skeletal muscle.

It localises to the golgi apparatus membrane. The protein localises to the golgi apparatus. It is found in the trans-Golgi network. The protein resides in the cytoplasm. Its subcellular location is the cytosol. Positive regulator of amino acid starvation-induced autophagy. The polypeptide is Short coiled-coil protein (SCOC) (Homo sapiens (Human)).